A 949-amino-acid polypeptide reads, in one-letter code: Protein translocase subunit SecA (949 aa).

Residues Gln-87, 105-109 (GEGKT), and Asp-524 contribute to the ATP site. 2 disordered regions span residues 852–876 (PPPG…SSGG) and 896–939 (LEFS…GSGK). Cys-933, Cys-935, Cys-944, and His-945 together coordinate Zn(2+).

The protein belongs to the SecA family. In terms of assembly, monomer and homodimer. Part of the essential Sec protein translocation apparatus which comprises SecA, SecYEG and auxiliary proteins SecDF-YajC and YidC. It depends on Zn(2+) as a cofactor.

It localises to the cell inner membrane. Its subcellular location is the cytoplasm. It carries out the reaction ATP + H2O + cellular proteinSide 1 = ADP + phosphate + cellular proteinSide 2.. Part of the Sec protein translocase complex. Interacts with the SecYEG preprotein conducting channel. Has a central role in coupling the hydrolysis of ATP to the transfer of proteins into and across the cell membrane, serving both as a receptor for the preprotein-SecB complex and as an ATP-driven molecular motor driving the stepwise translocation of polypeptide chains across the membrane. The protein is Protein translocase subunit SecA of Methylocella silvestris (strain DSM 15510 / CIP 108128 / LMG 27833 / NCIMB 13906 / BL2).